The primary structure comprises 134 residues: Retinoid-binding protein 7 (134 aa).

Belongs to the calycin superfamily. Fatty-acid binding protein (FABP) family. Expressed primarily in kidney, heart and transverse colon. Detected in adult lymph node, appendix, ascending colon, and in fetal heart and spleen.

It localises to the cytoplasm. Functionally, intracellular transport of retinol. The protein is Retinoid-binding protein 7 (RBP7) of Homo sapiens (Human).